The following is a 50-amino-acid chain: Protein PsbN (50 aa).

A helical membrane pass occupies residues Val14–Phe34.

Belongs to the PsbN family.

It localises to the cellular thylakoid membrane. Functionally, may play a role in photosystem I and II biogenesis. The polypeptide is Protein PsbN (Prochlorococcus marinus (strain MIT 9515)).